The chain runs to 628 residues: UvrABC system protein C (628 aa).

A GIY-YIG domain is found at 20–99 (TSAGVYLMRD…IKTHKPRYNV (80 aa)). The 36-residue stretch at 209-244 (AELLAQLEDQMQTAAAAMNFEHAARLRDRITGLNQL) folds into the UVR domain.

Belongs to the UvrC family. Interacts with UvrB in an incision complex.

Its subcellular location is the cytoplasm. Its function is as follows. The UvrABC repair system catalyzes the recognition and processing of DNA lesions. UvrC both incises the 5' and 3' sides of the lesion. The N-terminal half is responsible for the 3' incision and the C-terminal half is responsible for the 5' incision. This chain is UvrABC system protein C, found in Gloeobacter violaceus (strain ATCC 29082 / PCC 7421).